The sequence spans 204 residues: Thiamine-phosphate synthase (204 aa).

4-amino-2-methyl-5-(diphosphooxymethyl)pyrimidine-binding positions include 28–32 and Asn-60; that span reads QLRIK. Residues Asp-61 and Asp-80 each coordinate Mg(2+). 4-amino-2-methyl-5-(diphosphooxymethyl)pyrimidine-binding residues include Ser-99 and Lys-128. 2-[(2R,5Z)-2-carboxy-4-methylthiazol-5(2H)-ylidene]ethyl phosphate contacts are provided by residues Gly-157 and 177–178; that span reads VT.

The protein belongs to the thiamine-phosphate synthase family. Mg(2+) serves as cofactor.

It catalyses the reaction 2-[(2R,5Z)-2-carboxy-4-methylthiazol-5(2H)-ylidene]ethyl phosphate + 4-amino-2-methyl-5-(diphosphooxymethyl)pyrimidine + 2 H(+) = thiamine phosphate + CO2 + diphosphate. The enzyme catalyses 2-(2-carboxy-4-methylthiazol-5-yl)ethyl phosphate + 4-amino-2-methyl-5-(diphosphooxymethyl)pyrimidine + 2 H(+) = thiamine phosphate + CO2 + diphosphate. It carries out the reaction 4-methyl-5-(2-phosphooxyethyl)-thiazole + 4-amino-2-methyl-5-(diphosphooxymethyl)pyrimidine + H(+) = thiamine phosphate + diphosphate. It participates in cofactor biosynthesis; thiamine diphosphate biosynthesis; thiamine phosphate from 4-amino-2-methyl-5-diphosphomethylpyrimidine and 4-methyl-5-(2-phosphoethyl)-thiazole: step 1/1. In terms of biological role, condenses 4-methyl-5-(beta-hydroxyethyl)thiazole monophosphate (THZ-P) and 2-methyl-4-amino-5-hydroxymethyl pyrimidine pyrophosphate (HMP-PP) to form thiamine monophosphate (TMP). The protein is Thiamine-phosphate synthase of Rhizobium etli (strain ATCC 51251 / DSM 11541 / JCM 21823 / NBRC 15573 / CFN 42).